Reading from the N-terminus, the 789-residue chain is Transducer protein Htr6 (789 aa).

The next 2 helical transmembrane spans lie at 29-49 (FAVAFIVVLVVIAGAGVFAFQ) and 294-314 (TVTVLVVLAVISLAIVGIALG). 2 HAMP domains span residues 315 to 367 (RHTV…DRIQ) and 409 to 462 (ERLQ…ATIA). Positions 481–717 (GAEEIETTSQ…SVVRRVDDVA (237 aa)) constitute a Methyl-accepting transducer domain. Residues 763–789 (NQFETRADADEPDADTTVDASADDTGD) are disordered. Acidic residues predominate over residues 772–789 (DEPDADTTVDASADDTGD).

It belongs to the methyl-accepting chemotaxis (MCP) protein family. Methylated by CheR.

It is found in the cell membrane. Potentially involved in chemo- or phototactic signal transduction. In Halobacterium salinarum (strain ATCC 29341 / DSM 671 / R1), this protein is Transducer protein Htr6 (htr6).